The sequence spans 203 residues: MKKWLAISCLIAGMTSTAVYADAAKDLQGRLNKVNSFHANFSQKVTSADGAAVQEGEGELWLKRPNLFNWKTTSPDESTLISDGKTLWFYNPFVEQVTATWLKDATGNTPFILITRNDASDWNKYDVRQKGDDFELTPKSASGNLKQFAINVTTNGTIKQFTATEQDGQRSTYVLKNQQNAAVDAAQFTFTPPKGVTLDDQRQ.

The signal sequence occupies residues 1–20 (MKKWLAISCLIAGMTSTAVY).

The protein belongs to the LolA family. Monomer.

The protein resides in the periplasm. Participates in the translocation of lipoproteins from the inner membrane to the outer membrane. Only forms a complex with a lipoprotein if the residue after the N-terminal Cys is not an aspartate (The Asp acts as a targeting signal to indicate that the lipoprotein should stay in the inner membrane). The sequence is that of Outer-membrane lipoprotein carrier protein from Pectobacterium carotovorum subsp. carotovorum (strain PC1).